The sequence spans 270 residues: Phosphatidylglycerol--prolipoprotein diacylglyceryl transferase (270 aa).

4 helical membrane-spanning segments follow: residues Phe-19–Ala-39, Leu-56–Glu-76, Gln-92–Ala-112, and Gly-116–Ile-136. An a 1,2-diacyl-sn-glycero-3-phospho-(1'-sn-glycerol)-binding site is contributed by Arg-138. 3 helical membrane passes run His-178 to Leu-198, Gly-206 to Leu-226, and Leu-236 to Val-256.

The protein belongs to the Lgt family.

Its subcellular location is the cell membrane. It carries out the reaction L-cysteinyl-[prolipoprotein] + a 1,2-diacyl-sn-glycero-3-phospho-(1'-sn-glycerol) = an S-1,2-diacyl-sn-glyceryl-L-cysteinyl-[prolipoprotein] + sn-glycerol 1-phosphate + H(+). Its pathway is protein modification; lipoprotein biosynthesis (diacylglyceryl transfer). Its function is as follows. Catalyzes the transfer of the diacylglyceryl group from phosphatidylglycerol to the sulfhydryl group of the N-terminal cysteine of a prolipoprotein, the first step in the formation of mature lipoproteins. This chain is Phosphatidylglycerol--prolipoprotein diacylglyceryl transferase, found in Bacillus thuringiensis subsp. konkukian (strain 97-27).